The primary structure comprises 289 residues: Protein FraH (289 aa).

A DZANK-type zinc finger spans residues 4–49; that stretch reads CPNCNHPNPDGAVQCEACYTPLPATSNCPNCGATVQSDAAFCGQCG. Residues 18–48 fold into a zinc finger; it reads CEACYTPLPATSNCPNCGATVQSDAAFCGQC. Positions 204 to 260 constitute an FHA domain; the sequence is VHIGKPNDRIPPDVDVSGFANSEIVSRVHADIRLEGDAHYIEDVGSSNGTYINNLPL.

Functionally, putative heterocyst to vegetative cell connection. This Nostoc sp. (strain PCC 7120 / SAG 25.82 / UTEX 2576) protein is Protein FraH (fraH).